The following is a 734-amino-acid chain: Photosystem I P700 chlorophyll a apoprotein A2 (734 aa).

Transmembrane regions (helical) follow at residues 46–69, 135–158, 175–199, 273–291, 330–353, 369–395, 417–439, and 517–535; these read IFAS…FHVA, LYTG…LHLQ, LNHH…HVAI, IAHH…GHMY, LHFQ…QHMY, AALY…IFLI, AIIS…LYVH, and FLVH…LILV. Residues Cys-559 and Cys-568 each contribute to the [4Fe-4S] cluster site. 2 helical membrane-spanning segments follow: residues 575–596 and 643–665; these read AFYS…YWHW and LSVW…MFLI. Positions 654, 662, and 670 each coordinate chlorophyll a. Trp-671 is a phylloquinone binding site. A helical transmembrane segment spans residues 707-727; the sequence is LVGLAHFSVGYIFTYAAFLIA.

Belongs to the PsaA/PsaB family. In terms of assembly, the PsaA/B heterodimer binds the P700 chlorophyll special pair and subsequent electron acceptors. PSI consists of a core antenna complex that captures photons, and an electron transfer chain that converts photonic excitation into a charge separation. The eukaryotic PSI reaction center is composed of at least 11 subunits. P700 is a chlorophyll a/chlorophyll a' dimer, A0 is one or more chlorophyll a, A1 is one or both phylloquinones and FX is a shared 4Fe-4S iron-sulfur center. serves as cofactor.

The protein localises to the plastid. The protein resides in the chloroplast thylakoid membrane. The enzyme catalyses reduced [plastocyanin] + hnu + oxidized [2Fe-2S]-[ferredoxin] = oxidized [plastocyanin] + reduced [2Fe-2S]-[ferredoxin]. PsaA and PsaB bind P700, the primary electron donor of photosystem I (PSI), as well as the electron acceptors A0, A1 and FX. PSI is a plastocyanin-ferredoxin oxidoreductase, converting photonic excitation into a charge separation, which transfers an electron from the donor P700 chlorophyll pair to the spectroscopically characterized acceptors A0, A1, FX, FA and FB in turn. Oxidized P700 is reduced on the lumenal side of the thylakoid membrane by plastocyanin. The protein is Photosystem I P700 chlorophyll a apoprotein A2 of Huperzia lucidula (Shining clubmoss).